Consider the following 207-residue polypeptide: Suppressor of IKBKE 1 (207 aa).

Coiled-coil stretches lie at residues 70 to 102 and 164 to 192; these read HILL…DALE and CKVQ…ESLQ.

Belongs to the SIKE family. In terms of assembly, interacts with IKBKE and TBK1 via its coiled coil region. Interaction with TBK1 is disrupted upon viral infection or TLR3 stimulation. Interacts with CDC42BPB. Interacts with SIKE1 which mediates association with the STRIPAK core complex composed of PP2A catalytic and scaffolding subunits, the striatins (PP2A regulatory subunits), the striatin-associated proteins MOB4, STRIP1 and STRIP2, PDCD10 and members of the STE20 kinases, such as STK24 and STK26.

The protein localises to the cytoplasm. Functionally, physiological suppressor of IKK-epsilon and TBK1 that plays an inhibitory role in virus- and TLR3-triggered IRF3. Inhibits TLR3-mediated activation of interferon-stimulated response elements (ISRE) and the IFN-beta promoter. May act by disrupting the interactions of IKBKE or TBK1 with TICAM1/TRIF, IRF3 and RIGI. Does not inhibit NF-kappa-B activation pathways. Associates with the striatin-interacting phosphatase and kinase (STRIPAK) core complex, forming the extended (SIKE1:SLMAP)STRIPAK complex. The (SIKE1:SLMAP)STRIPAK complex dephosphorylates STK3 leading to the inhibition of Hippo signaling and the control of cell growth. This chain is Suppressor of IKBKE 1 (Sike1), found in Mus musculus (Mouse).